Here is a 407-residue protein sequence, read N- to C-terminus: Tryptophan synthase beta chain (407 aa).

Lysine 91 carries the N6-(pyridoxal phosphate)lysine modification.

The protein belongs to the TrpB family. Tetramer of two alpha and two beta chains. It depends on pyridoxal 5'-phosphate as a cofactor.

It carries out the reaction (1S,2R)-1-C-(indol-3-yl)glycerol 3-phosphate + L-serine = D-glyceraldehyde 3-phosphate + L-tryptophan + H2O. The protein operates within amino-acid biosynthesis; L-tryptophan biosynthesis; L-tryptophan from chorismate: step 5/5. Its function is as follows. The beta subunit is responsible for the synthesis of L-tryptophan from indole and L-serine. This Streptococcus pneumoniae (strain 70585) protein is Tryptophan synthase beta chain.